The primary structure comprises 1066 residues: Zinc finger and BTB domain-containing protein 21 (1066 aa).

Residues 30–96 form the BTB domain; the sequence is CDVLLIVGDQ…IYSSSLFVEK (67 aa). The tract at residues 30–96 is mediates homodimerization; that stretch reads CDVLLIVGDQ…IYSSSLFVEK (67 aa). Lys-40 is covalently cross-linked (Glycyl lysine isopeptide (Lys-Gly) (interchain with G-Cter in SUMO1); alternate). Lys-40 participates in a covalent cross-link: Glycyl lysine isopeptide (Lys-Gly) (interchain with G-Cter in SUMO2); alternate. A compositionally biased stretch (polar residues) spans 154–177; sequence SRNEAQGKTVSQNQPDVSHTSRPS. Positions 154–196 are disordered; that stretch reads SRNEAQGKTVSQNQPDVSHTSRPSPSIAVKANTNKPHVPKPIE. Residues Lys-255, Lys-266, Lys-273, Lys-312, and Lys-337 each participate in a glycyl lysine isopeptide (Lys-Gly) (interchain with G-Cter in SUMO2) cross-link. A phosphoserine mark is found at Ser-345 and Ser-381. Lys-383 participates in a covalent cross-link: Glycyl lysine isopeptide (Lys-Gly) (interchain with G-Cter in SUMO2). Residues 388-399 are compositionally biased toward basic and acidic residues; the sequence is DCSEKTALDDRP. 3 disordered regions span residues 388–442, 454–485, and 498–525; these read DCSE…DPSD, TAAA…AKRR, and KVNE…ADFP. 2 positions are modified to phosphoserine: Ser-411 and Ser-422. Lys-430 participates in a covalent cross-link: Glycyl lysine isopeptide (Lys-Gly) (interchain with G-Cter in SUMO2). A Phosphothreonine modification is found at Thr-431. Residues Ser-434, Ser-435, and Ser-438 each carry the phosphoserine modification. Positions 466–478 are enriched in basic and acidic residues; it reads LSLKTEDDQKDMS. Glycyl lysine isopeptide (Lys-Gly) (interchain with G-Cter in SUMO2) cross-links involve residues Lys-469 and Lys-475. 2 C2H2-type zinc fingers span residues 546-569 and 575-598; these read FKCK…NMYH and YACD…QTQH. At Ser-605 the chain carries Phosphoserine. Residues Lys-617, Lys-643, and Lys-659 each participate in a glycyl lysine isopeptide (Lys-Gly) (interchain with G-Cter in SUMO2) cross-link. Residues 670–692 form a C2H2-type 3 zinc finger; the sequence is YICTYCGKAYRFLSQFKQHIKMH. Lys-702 participates in a covalent cross-link: Glycyl lysine isopeptide (Lys-Gly) (interchain with G-Cter in SUMO2). Ser-714 is modified (phosphoserine). A C2H2-type 4; atypical zinc finger spans residues 748–770; that stretch reads AVCPYCSLRFFSPELKQEHESKC. Residues Lys-763 and Lys-785 each participate in a glycyl lysine isopeptide (Lys-Gly) (interchain with G-Cter in SUMO2) cross-link. The C2H2-type 5 zinc-finger motif lies at 775-798; that stretch reads LTCLECMRTFKSSFSIWRHQVEVH. The segment at 806–840 is disordered; sequence TENFSLPVLDHNGDVTGSSRPQSQPEPNKVNHIVT. Residues 820-831 are compositionally biased toward polar residues; the sequence is VTGSSRPQSQPE. Residue Lys-875 forms a Glycyl lysine isopeptide (Lys-Gly) (interchain with G-Cter in SUMO2) linkage. Lys-879 is covalently cross-linked (Glycyl lysine isopeptide (Lys-Gly) (interchain with G-Cter in SUMO1); alternate). A Glycyl lysine isopeptide (Lys-Gly) (interchain with G-Cter in SUMO2); alternate cross-link involves residue Lys-879. The disordered stretch occupies residues 879–906; that stretch reads KEEPVEEAEEEAPEASTAPKEAGPSKEA. Positions 882–891 are enriched in acidic residues; it reads PVEEAEEEAP. The segment at 909 to 932 adopts a C2H2-type 6; atypical zinc-finger fold; it reads WPCEKCGKMFTVHKQLERHQELLC. Lys-935 is covalently cross-linked (Glycyl lysine isopeptide (Lys-Gly) (interchain with G-Cter in SUMO2)). A C2H2-type 7 zinc finger spans residues 937-959; it reads FICHVCNKAFRTNFRLWSHFQSH. Residues 963–1014 form a disordered region; that stretch reads ASEESAHKESEVCPVPTNSPSPPPLPPPPPLPKIQPLEPDSPTGLSENPTPA. The span at 979–995 shows a compositional bias: pro residues; sequence TNSPSPPPLPPPPPLPK. Ser-1003 carries the post-translational modification Phosphoserine. The C2H2-type 8 zinc-finger motif lies at 1043–1065; that stretch reads FMCKLCHRTFKTAFSLWSHEQTH.

In terms of assembly, homodimer. Interacts with ZBTB14. As to expression, ubiquitous in fetal and adult tissues.

Its subcellular location is the nucleus. Acts as a transcription repressor. This is Zinc finger and BTB domain-containing protein 21 (ZBTB21) from Homo sapiens (Human).